The chain runs to 1129 residues: Regulator of nonsense transcripts 1 (1129 aa).

Residues 1–415 (MSVEAYGPSS…LRSSVGAPVE (415 aa)) are sufficient for interaction with RENT2. Phosphoserine is present on residues Ser10 and Ser31. A disordered region spans residues 39 to 70 (TLPSQTQTPPGGPGGPGGGGAGGPGGAGAGAA). Residues 52–69 (GGPGGGGAGGPGGAGAGA) are compositionally biased toward gly residues. Positions 115-272 (TKDLPIHACS…NKLEELWKEN (158 aa)) constitute a Upf1 CH-rich domain. Residues Cys123, Cys126, Cys137, Ser140, Cys145, His155, His159, Cys165, Cys183, Cys186, Cys209, and Cys213 each contribute to the Zn(2+) site. A C3H region spans residues 123-155 (CSYCGIHDPACVVYCNTSKKWFCNGRGNTSGSH). Residues 137–165 (CNTSKKWFCNGRGNTSGSHIVNHLVRAKC) form a CC/SHH/C region. A C4 region spans residues 183-213 (CYNCGCRNVFLLGFIPAKADSVVVLLCRQPC). Residues Gln486 and 506–510 (GTGKT) contribute to the ATP site. Ser565 is subject to Phosphoserine. Residues Gln676, Tyr713, and Glu844 each contribute to the ATP site. Position 956 is a phosphoserine (Ser956). Disordered stretches follow at residues 1009-1058 (FGQA…VASQ) and 1073-1096 (SQPSQMSQPGLSQPELSQDSYLGD). Arg1019 bears the Omega-N-methylarginine mark. The segment covering 1025 to 1034 (KTGRGGRQKN) has biased composition (basic residues). Over residues 1041–1058 (PSQTNLPNSQASQDVASQ) the composition is skewed to polar residues. A compositionally biased stretch (low complexity) spans 1073–1086 (SQPSQMSQPGLSQP). Phosphoserine occurs at positions 1089, 1107, 1110, and 1127. 2 short sequence motifs ([ST]-Q motif) span residues 1089–1090 (SQ) and 1107–1108 (SQ). The disordered stretch occupies residues 1110–1129 (STYQGERAYQHGGVTGLSQY).

This sequence belongs to the DNA2/NAM7 helicase family. In terms of assembly, found in a post-splicing messenger ribonucleoprotein (mRNP) complex. Associates with the exon junction complex (EJC). Associates with the SGM1C complex; is phosphorylated by the complex kinase component SGM1. Part of a complex composed of SMG1, DHX34 and UPF1; within the complex DHX34 acts as a scaffolding protein to facilitate SMG1 phosphorylation of UPF1. Interacts with UPF2. Interacts with UPF3A and UPF3B. Interacts with EST1A. Interacts with SLBP. Interacts (when hyperphosphorylated) with PNRC2. Interacts with AGO1 and AGO2. Interacts with GSPT2. Interacts with isoform 1 and isoform 5 of ADAR/ADAR1. Interacts with SMG7. Interacts with ZC3H12A; this interaction occurs in a mRNA translationally active- and termination-dependent manner and is essential for ZC3H12A-mediated degradation of target mRNAs. Interacts with CPSF6. Interacts with MOV10; the interaction is direct and RNA-dependent. Interacts with SHFL; the interaction increases in the presence of RNA. Interacts with UPF2 and DDX4; interactions are mediated by TDRD6. Interacts with DHX34 and PABPC1/PABP1; the interactions are RNA-independent. Interacts with RBM46. (Microbial infection) Interacts with human T-cell leukemia virus 1/HTLV-1 protein Tax; this interaction inhibits the host nonsense-mediated mRNA decay (NMD). Post-translationally, phosphorylated by SMG1; required for formation of mRNA surveillance complexes. Ubiquitous.

It is found in the cytoplasm. The protein resides in the P-body. The protein localises to the nucleus. Its subcellular location is the perinuclear region. It carries out the reaction ATP + H2O = ADP + phosphate + H(+). Its function is as follows. RNA-dependent helicase required for nonsense-mediated decay (NMD) of aberrant mRNAs containing premature stop codons and modulates the expression level of normal mRNAs. Is recruited to mRNAs upon translation termination and undergoes a cycle of phosphorylation and dephosphorylation; its phosphorylation appears to be a key step in NMD. Recruited by release factors to stalled ribosomes together with the SMG1C protein kinase complex to form the transient SURF (SMG1-UPF1-eRF1-eRF3) complex. In EJC-dependent NMD, the SURF complex associates with the exon junction complex (EJC) (located 50-55 or more nucleotides downstream from the termination codon) through UPF2 and allows the formation of an UPF1-UPF2-UPF3 surveillance complex which is believed to activate NMD. Phosphorylated UPF1 is recognized by EST1B/SMG5, SMG6 and SMG7 which are thought to provide a link to the mRNA degradation machinery involving exonucleolytic and endonucleolytic pathways, and to serve as adapters to protein phosphatase 2A (PP2A), thereby triggering UPF1 dephosphorylation and allowing the recycling of NMD factors. UPF1 can also activate NMD without UPF2 or UPF3, and in the absence of the NMD-enhancing downstream EJC indicative for alternative NMD pathways. Plays a role in replication-dependent histone mRNA degradation at the end of phase S; the function is independent of UPF2. For the recognition of premature termination codons (PTC) and initiation of NMD a competitive interaction between UPF1 and PABPC1 with the ribosome-bound release factors is proposed. The ATPase activity of UPF1 is required for disassembly of mRNPs undergoing NMD. Together with UPF2 and dependent on TDRD6, mediates the degradation of mRNA harboring long 3'UTR by inducing the NMD machinery. Also capable of unwinding double-stranded DNA and translocating on single-stranded DNA. In Homo sapiens (Human), this protein is Regulator of nonsense transcripts 1.